The chain runs to 236 residues: Eukaryotic translation initiation factor 3 subunit J (236 aa).

The interval 1-84 (MADDWESAAD…LREEEAEAER (84 aa)) is disordered. Residues 28 to 46 (GEDEDEDIKDSWEDEEEKK) are compositionally biased toward acidic residues. Basic and acidic residues-rich tracts occupy residues 47–58 (DEEKPTKTEAPA) and 68–77 (AKLEQQALRE).

The protein belongs to the eIF-3 subunit J family. As to quaternary structure, component of the eukaryotic translation initiation factor 3 (eIF-3) complex. The eIF-3 complex interacts with pix.

Its subcellular location is the cytoplasm. Component of the eukaryotic translation initiation factor 3 (eIF-3) complex, which is involved in protein synthesis of a specialized repertoire of mRNAs and, together with other initiation factors, stimulates binding of mRNA and methionyl-tRNAi to the 40S ribosome. The eIF-3 complex specifically targets and initiates translation of a subset of mRNAs involved in cell proliferation. In Drosophila sechellia (Fruit fly), this protein is Eukaryotic translation initiation factor 3 subunit J.